Here is an 865-residue protein sequence, read N- to C-terminus: Xylosyltransferase 2 (865 aa).

At 1–15 (MVASARVQKLVRRYK) the chain is on the cytoplasmic side. Residues 16–36 (LAIATALAILLLQGLVVWSFS) form a helical; Signal-anchor for type II membrane protein membrane-spanning segment. The Lumenal segment spans residues 37-865 (GLEEDEAGEK…GPVKADGRLR (829 aa)). The disordered stretch occupies residues 41-157 (DEAGEKGRQR…EGAPQPTDNG (117 aa)). The segment covering 53–65 (RPLDPGEGSKDTD) has biased composition (basic and acidic residues). The segment covering 73 to 82 (STGRRHGRWR) has biased composition (basic residues). N-linked (GlcNAc...) asparagine glycosylation occurs at Asn122. The span at 125–137 (GAAAGEALVGAAG) shows a compositional bias: low complexity. Intrachain disulfides connect Cys162–Cys190, Cys206–Cys448, Cys467–Cys480, and Cys469–Cys478. UDP-alpha-D-xylose contacts are provided by residues Val239, Asp267, and 296–298 (TIW). An N-linked (GlcNAc...) asparagine glycan is attached at Asn327. 400–401 (DW) provides a ligand contact to UDP-alpha-D-xylose. Residues Ser481 and 504–505 (RK) each bind UDP-alpha-D-xylose. Intrachain disulfides connect Cys581–Cys833 and Cys826–Cys839. N-linked (GlcNAc...) asparagine glycosylation occurs at Asn683. The tract at residues 846–865 (SLSPDPKSELGPVKADGRLR) is disordered.

It belongs to the glycosyltransferase 14 family. XylT subfamily. In terms of assembly, monomer. Requires Mg(2+) as cofactor. It depends on Mn(2+) as a cofactor. Contains disulfide bonds.

It is found in the golgi apparatus membrane. It localises to the secreted. The catalysed reaction is UDP-alpha-D-xylose + L-seryl-[protein] = 3-O-(beta-D-xylosyl)-L-seryl-[protein] + UDP + H(+). Its pathway is glycan metabolism; chondroitin sulfate biosynthesis. It participates in glycan metabolism; heparan sulfate biosynthesis. In terms of biological role, catalyzes the first step in the biosynthesis of chondroitin sulfate, heparan sulfate and dermatan sulfate proteoglycans, such as DCN. Transfers D-xylose from UDP-D-xylose to specific serine residues of the core protein. This Pan troglodytes (Chimpanzee) protein is Xylosyltransferase 2 (XYLT2).